A 202-amino-acid chain; its full sequence is MTYELPKLPYTYDALEPNFDKETMEIHYTKHHNIYVTKLNEAVSGHAELASKPGEELVANLDSVPEEIRGAVRNHGGGHANHTLFWSSLSPNGGGAPTGNLKAAIESEFGTFDEFKEKFNAAAAARFGSGWAWLVVNNGKLEIVSTANQDSPLSEGKTPVLGLDVWEHAYYLKFQNRRPEYIDTFWNVINWDERNKRFDAAK.

The Mn(2+) site is built by H27, H82, D164, and H168.

It belongs to the iron/manganese superoxide dismutase family. In terms of assembly, homodimer. Requires Mn(2+) as cofactor.

The catalysed reaction is 2 superoxide + 2 H(+) = H2O2 + O2. Destroys superoxide anion radicals which are normally produced within the cells and which are toxic to biological systems. The polypeptide is Superoxide dismutase [Mn] (sodA) (Listeria ivanovii).